The primary structure comprises 147 residues: Protein Turandot Z (147 aa).

Positions 1–23 are cleaved as a signal peptide; it reads MYFAIRLSFVLAVLICLTGNGSA.

It belongs to the Turandot family.

Its subcellular location is the secreted. A humoral factor that may play a role in stress tolerance. The sequence is that of Protein Turandot Z from Drosophila melanogaster (Fruit fly).